Consider the following 523-residue polypeptide: uncharacterized protein (523 aa).

A chloroplast-targeting transit peptide spans 1–63 (MACVSTCLIL…NRHGIAVVKA (63 aa)). A run of 3 helical transmembrane segments spans residues 180 to 200 (VSFG…IIAL), 386 to 406 (ALVI…NTLL), and 423 to 443 (IYPL…IRWF).

Its subcellular location is the plastid. The protein localises to the chloroplast membrane. This is an uncharacterized protein from Arabidopsis thaliana (Mouse-ear cress).